A 322-amino-acid chain; its full sequence is Pilin gene-inverting protein (322 aa).

In terms of biological role, may be the site-specific invertase required for pilin gene inversion. Moraxella can express either a Q or I pilin; the inversion of 2 kb of DNA determines which pilin is expressed. The polypeptide is Pilin gene-inverting protein (piv) (Moraxella lacunata).